Here is a 519-residue protein sequence, read N- to C-terminus: Bifunctional purine biosynthesis protein PurH (519 aa).

Residues 1–147 (MAKITRALIS…KNNHDVTVLV (147 aa)) form the MGS-like domain.

It belongs to the PurH family.

It catalyses the reaction (6R)-10-formyltetrahydrofolate + 5-amino-1-(5-phospho-beta-D-ribosyl)imidazole-4-carboxamide = 5-formamido-1-(5-phospho-D-ribosyl)imidazole-4-carboxamide + (6S)-5,6,7,8-tetrahydrofolate. It carries out the reaction IMP + H2O = 5-formamido-1-(5-phospho-D-ribosyl)imidazole-4-carboxamide. Its pathway is purine metabolism; IMP biosynthesis via de novo pathway; 5-formamido-1-(5-phospho-D-ribosyl)imidazole-4-carboxamide from 5-amino-1-(5-phospho-D-ribosyl)imidazole-4-carboxamide (10-formyl THF route): step 1/1. It functions in the pathway purine metabolism; IMP biosynthesis via de novo pathway; IMP from 5-formamido-1-(5-phospho-D-ribosyl)imidazole-4-carboxamide: step 1/1. In Trichlorobacter lovleyi (strain ATCC BAA-1151 / DSM 17278 / SZ) (Geobacter lovleyi), this protein is Bifunctional purine biosynthesis protein PurH.